Here is a 437-residue protein sequence, read N- to C-terminus: Ribosomal protein uS12 methylthiotransferase RimO (437 aa).

The MTTase N-terminal domain maps to 9–124 (TKVNIVTLGC…LPAILKKFRA (116 aa)). [4Fe-4S] cluster is bound by residues Cys-18, Cys-56, Cys-90, Cys-151, Cys-155, and Cys-158. The 231-residue stretch at 137-367 (TTPSHYAYVK…MSIQEGISAE (231 aa)) folds into the Radical SAM core domain. The TRAM domain occupies 370–437 (EKKIGNTYKV…EFDLFGEIVK (68 aa)).

It belongs to the methylthiotransferase family. RimO subfamily. [4Fe-4S] cluster is required as a cofactor.

The protein resides in the cytoplasm. It carries out the reaction L-aspartate(89)-[ribosomal protein uS12]-hydrogen + (sulfur carrier)-SH + AH2 + 2 S-adenosyl-L-methionine = 3-methylsulfanyl-L-aspartate(89)-[ribosomal protein uS12]-hydrogen + (sulfur carrier)-H + 5'-deoxyadenosine + L-methionine + A + S-adenosyl-L-homocysteine + 2 H(+). Catalyzes the methylthiolation of an aspartic acid residue of ribosomal protein uS12. The polypeptide is Ribosomal protein uS12 methylthiotransferase RimO (Cytophaga hutchinsonii (strain ATCC 33406 / DSM 1761 / CIP 103989 / NBRC 15051 / NCIMB 9469 / D465)).